Here is a 224-residue protein sequence, read N- to C-terminus: Twisted gastrulation protein homolog 1 (224 aa).

Residues 1–26 form the signal peptide; that stretch reads MRSPCAALSASLLLLLLLLWARSSVG. N53, N82, and N148 each carry an N-linked (GlcNAc...) asparagine glycan.

Belongs to the twisted gastrulation protein family. In terms of assembly, interacts with CHRD and BMP4. This interaction enhances CHRD/BMP4 complex formation. Interacts with BMP7.

It localises to the secreted. May be involved in dorsoventral axis formation. Seems to antagonize BMP signaling by forming ternary complexes with CHRD and BMPs, thereby preventing BMPs from binding to their receptors. In addition to the anti-BMP function, also has pro-BMP activity, partly mediated by cleavage and degradation of CHRD, which releases BMPs from ternary complexes. May be an important modulator of BMP-regulated cartilage development and chondrocyte differentiation. May play a role in thymocyte development. In Gallus gallus (Chicken), this protein is Twisted gastrulation protein homolog 1 (TWSG1).